We begin with the raw amino-acid sequence, 366 residues long: tRNA-specific 2-thiouridylase MnmA (366 aa).

ATP-binding positions include 6-13 (AMSGGVDS) and Leu-32. Cys-101 functions as the Nucleophile in the catalytic mechanism. Cys-101 and Cys-199 are joined by a disulfide. Gly-125 is a binding site for ATP. The tract at residues 148–150 (KDQ) is interaction with tRNA. Cys-199 functions as the Cysteine persulfide intermediate in the catalytic mechanism.

The protein belongs to the MnmA/TRMU family.

The protein resides in the cytoplasm. It catalyses the reaction S-sulfanyl-L-cysteinyl-[protein] + uridine(34) in tRNA + AH2 + ATP = 2-thiouridine(34) in tRNA + L-cysteinyl-[protein] + A + AMP + diphosphate + H(+). Its function is as follows. Catalyzes the 2-thiolation of uridine at the wobble position (U34) of tRNA, leading to the formation of s(2)U34. The chain is tRNA-specific 2-thiouridylase MnmA from Leifsonia xyli subsp. xyli (strain CTCB07).